The primary structure comprises 128 residues: Saitohin (128 aa).

The span at 77-87 (SYSSEENSRNG) shows a compositional bias: polar residues. The interval 77 to 128 (SYSSEENSRNGAEQGRQLSIEGPFQGQNCPSHPAAALPLPMRGESQATSCQV) is disordered.

In terms of assembly, interacts with PRDX6.

The protein localises to the cytoplasm. It is found in the nucleus. The protein is Saitohin (STH) of Pan troglodytes (Chimpanzee).